The following is a 411-amino-acid chain: Serpin A3-2 (411 aa).

The signal sequence occupies residues 1-24; it reads MRAERTSFLLALGLLVAGIRSVHC. N-linked (GlcNAc...) asparagine glycosylation is found at Asn-100, Asn-180, Asn-230, and Asn-264.

It belongs to the serpin family. Homodimer.

It localises to the cytoplasmic vesicle. Its subcellular location is the secretory vesicle. It is found in the chromaffin granule. The protein resides in the secreted. Serine protease inhibitor. The sequence is that of Serpin A3-2 from Bos taurus (Bovine).